The following is a 95-amino-acid chain: Large ribosomal subunit protein uL23 (95 aa).

This sequence belongs to the universal ribosomal protein uL23 family. In terms of assembly, part of the 50S ribosomal subunit. Contacts protein L29, and trigger factor when it is bound to the ribosome.

Functionally, one of the early assembly proteins it binds 23S rRNA. One of the proteins that surrounds the polypeptide exit tunnel on the outside of the ribosome. Forms the main docking site for trigger factor binding to the ribosome. This is Large ribosomal subunit protein uL23 from Thermodesulfovibrio yellowstonii (strain ATCC 51303 / DSM 11347 / YP87).